The following is a 384-amino-acid chain: Carbazole 1,9a-dioxygenase, terminal oxygenase component CarAa (384 aa).

The region spanning 29 to 135 (WYPVMFSKEI…VQEAKGCVFI (107 aa)) is the Rieske domain. Cysteine 69, histidine 71, cysteine 90, and histidine 93 together coordinate [2Fe-2S] cluster.

Homotrimer. Carbazole 1,9a-dioxygenase complex consists of a terminal oxygenase component CarAa, a ferredoxin reductase component CarAd and a ferredoxin component CarAc. It depends on [2Fe-2S] cluster as a cofactor.

The catalysed reaction is 9H-carbazole + NADH + O2 + H(+) = 2'-aminobiphenyl-2,3-diol + NAD(+). It carries out the reaction 9H-carbazole + NADPH + O2 + H(+) = 2'-aminobiphenyl-2,3-diol + NADP(+). Functionally, part of the multicomponent carbazole 1,9a-dioxygenase (CARDO), that converts carbazole (CAR) into 2-aminobiphenyl-2,3-diol. Catalyzes the dioxygenation at the angular (C-9a) and adjacent (C-1) positions of carbazole to yield a highly unstable cis-hydrodiol intermediate which is spontaneously converted to 2-aminobiphenyl-2,3-diol. It is also able to attack the angular position adjacent of hetero atom of heterocyclic aromatic compounds such as polychlorinated dibenzo-p-dioxin (DD) and dibenzofuran (DBF). It was also shown that CARDO has the ability to metabolize biphenyl and polycyclic aromatic hydrocarbons, such as naphthalene and phenanthrene. The chain is Carbazole 1,9a-dioxygenase, terminal oxygenase component CarAa (carAa) from Metapseudomonas resinovorans (Pseudomonas resinovorans).